Here is a 226-residue protein sequence, read N- to C-terminus: V-type proton ATPase subunit E 1 (226 aa).

The residue at position 2 (Ala2) is an N-acetylalanine. The residue at position 56 (Tyr56) is a Phosphotyrosine.

It belongs to the V-ATPase E subunit family. As to quaternary structure, V-ATPase is a heteromultimeric enzyme made up of two complexes: the ATP-hydrolytic V1 complex and the proton translocation V0 complex. The V1 complex consists of three catalytic AB heterodimers that form a heterohexamer, three peripheral stalks each consisting of EG heterodimers, one central rotor including subunits D and F, and the regulatory subunits C and H. The proton translocation complex V0 consists of the proton transport subunit a, a ring of proteolipid subunits c9c'', rotary subunit d, subunits e and f, and the accessory subunits ATP6AP1/Ac45 and ATP6AP2/PRR. Interacts with RABL2/RABL2A; binds preferentially to GTP-bound RABL2. Interacts with ALDOC. Interacts with RAB11B. In terms of tissue distribution, expressed in brain (at protein level).

It localises to the apical cell membrane. The protein localises to the cytoplasmic vesicle. The protein resides in the secretory vesicle. It is found in the synaptic vesicle membrane. Its subcellular location is the clathrin-coated vesicle membrane. In terms of biological role, subunit of the V1 complex of vacuolar(H+)-ATPase (V-ATPase), a multisubunit enzyme composed of a peripheral complex (V1) that hydrolyzes ATP and a membrane integral complex (V0) that translocates protons. V-ATPase is responsible for acidifying and maintaining the pH of intracellular compartments and in some cell types, is targeted to the plasma membrane, where it is responsible for acidifying the extracellular environment. The sequence is that of V-type proton ATPase subunit E 1 (Atp6v1e1) from Rattus norvegicus (Rat).